The following is an 829-amino-acid chain: Receptor-type tyrosine-protein phosphatase alpha (829 aa).

An N-terminal signal peptide occupies residues 1-19 (MDSWFILVLFGSGLIHVSA). Over 20–142 (NNATTVSPSL…ETFPPADETP (123 aa)) the chain is Extracellular. N-linked (GlcNAc...) asparagine glycosylation is found at N21, N47, N51, N68, N80, N86, N104, and N124. A disordered region spans residues 79 to 106 (VNSSHSDNGTRRAASTESGGTTISPNGS). Residues 143 to 166 (IIAVMVALSSLLVIVFIIIVLYML) form a helical membrane-spanning segment. Residues 167–829 (RFKKYKQAGS…DAFSDYANFK (663 aa)) are Cytoplasmic-facing. Phosphoserine is present on residues S202 and S204. 2 consecutive Tyrosine-protein phosphatase domains span residues 232–528 (FREE…LLEH) and 560–818 (LEEE…VQEY). Substrate is bound by residues D437, 469-475 (CSAGVGR), and Q513. C469 serves as the catalytic Phosphocysteine intermediate. Catalysis depends on C759, which acts as the Phosphocysteine intermediate. Position 825 is a phosphotyrosine (Y825).

It belongs to the protein-tyrosine phosphatase family. Receptor class 4 subfamily. As to quaternary structure, part of a complex comprised of PTPRA, BCAR1, BCAR3 (via SH2 domain), and SRC. Within the complex, interacts (when phosphorylated on Tyr-825) with BCAR3 (via SH2 domain). Interacts with GRB2. In terms of processing, integrin binding to extracellular matrix induces phosphorylation at Tyr-825 which induces PTPRA localization and recruitment of BCAR3, BCAR1 and CRK to focal adhesions. As to expression, widely expressed. Highest expression in brain and kidney.

Its subcellular location is the cell membrane. The protein resides in the cell junction. It localises to the focal adhesion. The catalysed reaction is O-phospho-L-tyrosyl-[protein] + H2O = L-tyrosyl-[protein] + phosphate. Tyrosine protein phosphatase which is involved in integrin-mediated focal adhesion formation. Following integrin engagement, specifically recruits BCAR3, BCAR1 and CRK to focal adhesions thereby promoting SRC-mediated phosphorylation of BRAC1 and the subsequent activation of PAK and small GTPase RAC1 and CDC42. The protein is Receptor-type tyrosine-protein phosphatase alpha (Ptpra) of Mus musculus (Mouse).